The primary structure comprises 377 residues: RIB43A-like with coiled-coils protein 2 (377 aa).

Residues 188–238 are a coiled coil; it reads ELKFDEAARDLQRLEITTRKAVCAAVKEFNKKQVVELAERKRQVKQQEQED. Positions 355–377 are disordered; sequence QLDAAPSSQPTEDYFSQFNTRSR. Over residues 360–377 the composition is skewed to polar residues; that stretch reads PSSQPTEDYFSQFNTRSR.

The protein belongs to the RIB43A family. In terms of assembly, microtubule inner protein component of sperm flagellar doublet microtubules.

Its subcellular location is the cytoplasm. The protein resides in the cytoskeleton. The protein localises to the cilium axoneme. It localises to the flagellum axoneme. In terms of biological role, microtubule inner protein (MIP) part of the dynein-decorated doublet microtubules (DMTs) in cilia axoneme, which is required for motile cilia beating. The chain is RIB43A-like with coiled-coils protein 2 from Rattus norvegicus (Rat).